The following is a 144-amino-acid chain: Large ribosomal subunit protein uL15 (144 aa).

The segment at 1–53 (MRLNTLSPAEGAKHAPKRVGRGIGSGLGKTAGRGHKGQNSRSGGGVRRGFEGG) is disordered. Over residues 21–31 (RGIGSGLGKTA) the composition is skewed to gly residues.

It belongs to the universal ribosomal protein uL15 family. As to quaternary structure, part of the 50S ribosomal subunit.

In terms of biological role, binds to the 23S rRNA. The sequence is that of Large ribosomal subunit protein uL15 from Serratia proteamaculans (strain 568).